Here is a 302-residue protein sequence, read N- to C-terminus: F-box protein At1g20360 (302 aa).

An F-box domain is found at 1-48 (MNSLPLHLLDQILFRLEPKSLAMMKSTNRTINSHISDPLFESEYFSRL).

The sequence is that of F-box protein At1g20360 from Arabidopsis thaliana (Mouse-ear cress).